Here is a 390-residue protein sequence, read N- to C-terminus: MAMAAAVIVPLGILFFISGLVVNLLQAVCYVLVRPMSKNTYRKINRVVAETLWLELVWIVDWWAGVKIQVFADDETFNRMGKEHALVVCNHRSDIDWLVGWILAQRSGCLGSALAVMKKSSKFLPVIGWSMWFSEYLFLERNWAKDESTLQSGLQRLNDFPRPFWLALFVEGTRFTEAKLKAAQEYAASSELPVPRNVLIPRTKGFVSAVSNMRSFVPAIYDMTVAIPKTSPPPTMLRLFKGQPSVVHVHIKCHSMKDLPEPEDEIAQWCRDQFVAKDALLDKHIAADTFPGQKEQNIGRPIKSLAVVVSWACLLTLGAMKFLHWSNLFSSWKGIALSAFGLGIITLCMQILIRSSQSERSTPAKVAPAKPKDNHQSGPSSQTEVEEKQK.

Residues 2–22 traverse the membrane as a helical segment; that stretch reads AMAAAVIVPLGILFFISGLVV. An HXXXXD motif motif is present at residues 91–96; that stretch reads HRSDID. Transmembrane regions (helical) follow at residues 305-325 and 333-353; these read LAVV…FLHW and KGIA…QILI. The segment at 358–390 is disordered; that stretch reads SERSTPAKVAPAKPKDNHQSGPSSQTEVEEKQK.

It belongs to the 1-acyl-sn-glycerol-3-phosphate acyltransferase family.

It localises to the endoplasmic reticulum membrane. The catalysed reaction is a 1-acyl-sn-glycero-3-phosphate + an acyl-CoA = a 1,2-diacyl-sn-glycero-3-phosphate + CoA. The protein operates within phospholipid metabolism; CDP-diacylglycerol biosynthesis; CDP-diacylglycerol from sn-glycerol 3-phosphate: step 2/3. Converts lysophosphatidic acid (LPA) into phosphatidic acid by incorporating acyl moiety at the 2 position. The polypeptide is 1-acyl-sn-glycerol-3-phosphate acyltransferase 2 (LPAT2) (Brassica napus (Rape)).